A 356-amino-acid chain; its full sequence is Red-sensitive opsin-2 (356 aa).

Topologically, residues 1–48 (MAEWANAAFAARRRGDETTRDNAFSYTNSNNTRDPFEGPNYHIAPRWV) are extracellular. Asparagine 30 is a glycosylation site (N-linked (GlcNAc...) asparagine). The helical transmembrane segment at 49–73 (YNVATVWMFFVVVASTFTNGLVLVA) threads the bilayer. The Cytoplasmic segment spans residues 74 to 85 (TAKFKKLRHPLN). The chain crosses the membrane as a helical span at residues 86-111 (WILVNLAIADLGETLFASTISVINQV). The Extracellular portion of the chain corresponds to 112-125 (FGYFILGHPMCIFE). A disulfide bond links cysteine 122 and cysteine 199. The chain crosses the membrane as a helical span at residues 126–145 (GYTVSVCGIAGLWSLTVISW). At 146 to 164 (ERWVVVCKPFGNVKFDGKW) the chain is on the cytoplasmic side. Residues 165-188 (ASAGIIFSWVWAAVWCAPPIFGWS) traverse the membrane as a helical segment. The Extracellular segment spans residues 189-214 (RYWPHGLKTSCGPDVFGGNEDPGVQS). The helical transmembrane segment at 215-242 (YMLVLMITCCILPLAIIILCYIAVFLAI) threads the bilayer. The Cytoplasmic segment spans residues 243–264 (HAVAQQQKDSESTQKAEKEVSR). The chain crosses the membrane as a helical span at residues 265-288 (MVVVMILAFCLCWGPYTAFACFAA). The Extracellular segment spans residues 289–296 (ANPGYAFH). Residues 297–321 (PLAAAMPAYFAKSATIYNPIIYVFM) traverse the membrane as a helical segment. An N6-(retinylidene)lysine modification is found at lysine 308. At 322-356 (NRQFRVCIMQLFGKKVDDGSEVSTSKTEVSSVAPA) the chain is on the cytoplasmic side.

It belongs to the G-protein coupled receptor 1 family. Opsin subfamily. Phosphorylated on some or all of the serine and threonine residues present in the C-terminal region.

It is found in the membrane. Visual pigments are the light-absorbing molecules that mediate vision. They consist of an apoprotein, opsin, covalently linked to cis-retinal. The protein is Red-sensitive opsin-2 (opn1lw2) of Danio rerio (Zebrafish).